The following is a 338-amino-acid chain: GTPase Obg (338 aa).

The region spanning M1 to I159 is the Obg domain. Positions A160–K333 constitute an OBG-type G domain. GTP-binding positions include G166–S173, F191–K195, D213–G216, N283–D286, and S314–I316. S173 and T193 together coordinate Mg(2+).

Belongs to the TRAFAC class OBG-HflX-like GTPase superfamily. OBG GTPase family. As to quaternary structure, monomer. The cofactor is Mg(2+).

The protein localises to the cytoplasm. In terms of biological role, an essential GTPase which binds GTP, GDP and possibly (p)ppGpp with moderate affinity, with high nucleotide exchange rates and a fairly low GTP hydrolysis rate. Plays a role in control of the cell cycle, stress response, ribosome biogenesis and in those bacteria that undergo differentiation, in morphogenesis control. This Buchnera aphidicola subsp. Baizongia pistaciae (strain Bp) protein is GTPase Obg.